The primary structure comprises 757 residues: 5-methyltetrahydropteroyltriglutamate--homocysteine methyltransferase (757 aa).

Residues 16–19 (RELK) and lysine 112 contribute to the 5-methyltetrahydropteroyltri-L-glutamate site. Residues 432-434 (IGS) and glutamate 485 contribute to the L-homocysteine site. Residues 432–434 (IGS) and glutamate 485 contribute to the L-methionine site. 5-methyltetrahydropteroyltri-L-glutamate contacts are provided by residues 516–517 (RC) and tryptophan 562. Residue aspartate 600 coordinates L-homocysteine. L-methionine is bound at residue aspartate 600. Glutamate 606 is a binding site for 5-methyltetrahydropteroyltri-L-glutamate. 3 residues coordinate Zn(2+): histidine 642, cysteine 644, and glutamate 666. The active-site Proton donor is the histidine 695. Cysteine 727 lines the Zn(2+) pocket.

The protein belongs to the vitamin-B12 independent methionine synthase family. Requires Zn(2+) as cofactor.

It catalyses the reaction 5-methyltetrahydropteroyltri-L-glutamate + L-homocysteine = tetrahydropteroyltri-L-glutamate + L-methionine. It participates in amino-acid biosynthesis; L-methionine biosynthesis via de novo pathway; L-methionine from L-homocysteine (MetE route): step 1/1. In terms of biological role, catalyzes the transfer of a methyl group from 5-methyltetrahydrofolate to homocysteine resulting in methionine formation. The sequence is that of 5-methyltetrahydropteroyltriglutamate--homocysteine methyltransferase from Actinobacillus pleuropneumoniae serotype 7 (strain AP76).